We begin with the raw amino-acid sequence, 490 residues long: Protein nucleotidyltransferase YdiU (490 aa).

ATP contacts are provided by G94, G96, R97, K117, D129, G130, R180, and R187. Residue D256 is the Proton acceptor of the active site. The Mg(2+) site is built by N257 and D266. D266 lines the ATP pocket.

This sequence belongs to the SELO family. It depends on Mg(2+) as a cofactor. The cofactor is Mn(2+).

The enzyme catalyses L-seryl-[protein] + ATP = 3-O-(5'-adenylyl)-L-seryl-[protein] + diphosphate. It catalyses the reaction L-threonyl-[protein] + ATP = 3-O-(5'-adenylyl)-L-threonyl-[protein] + diphosphate. The catalysed reaction is L-tyrosyl-[protein] + ATP = O-(5'-adenylyl)-L-tyrosyl-[protein] + diphosphate. It carries out the reaction L-histidyl-[protein] + UTP = N(tele)-(5'-uridylyl)-L-histidyl-[protein] + diphosphate. The enzyme catalyses L-seryl-[protein] + UTP = O-(5'-uridylyl)-L-seryl-[protein] + diphosphate. It catalyses the reaction L-tyrosyl-[protein] + UTP = O-(5'-uridylyl)-L-tyrosyl-[protein] + diphosphate. Nucleotidyltransferase involved in the post-translational modification of proteins. It can catalyze the addition of adenosine monophosphate (AMP) or uridine monophosphate (UMP) to a protein, resulting in modifications known as AMPylation and UMPylation. The chain is Protein nucleotidyltransferase YdiU from Clostridium beijerinckii (strain ATCC 51743 / NCIMB 8052) (Clostridium acetobutylicum).